We begin with the raw amino-acid sequence, 382 residues long: Anhydro-N-acetylmuramic acid kinase (382 aa).

ATP is bound at residue 15–22; the sequence is GTSLDGVD.

This sequence belongs to the anhydro-N-acetylmuramic acid kinase family.

The catalysed reaction is 1,6-anhydro-N-acetyl-beta-muramate + ATP + H2O = N-acetyl-D-muramate 6-phosphate + ADP + H(+). It functions in the pathway amino-sugar metabolism; 1,6-anhydro-N-acetylmuramate degradation. Its pathway is cell wall biogenesis; peptidoglycan recycling. In terms of biological role, catalyzes the specific phosphorylation of 1,6-anhydro-N-acetylmuramic acid (anhMurNAc) with the simultaneous cleavage of the 1,6-anhydro ring, generating MurNAc-6-P. Is required for the utilization of anhMurNAc either imported from the medium or derived from its own cell wall murein, and thus plays a role in cell wall recycling. This is Anhydro-N-acetylmuramic acid kinase from Haemophilus influenzae (strain ATCC 51907 / DSM 11121 / KW20 / Rd).